Reading from the N-terminus, the 305-residue chain is RNA-binding protein rnp-1 (305 aa).

In terms of domain architecture, RRM spans 3–72 (SKLFVGNLPD…KVVNIKKSTS (70 aa)). A CCHC-type zinc finger spans residues 84 to 97 (CFRCQSDEHRTPQC). A disordered region spans residues 284–305 (QQIQHQQATGSPAPVPAPPRLY). The segment covering 296–305 (APVPAPPRLY) has biased composition (pro residues).

As to expression, expressed throughout the germline.

Functionally, RNA-binding protein that is required for the germ line to transition from spermatogenesis to oogenesis and allow for normal oocyte development. This is RNA-binding protein rnp-1 from Caenorhabditis elegans.